The chain runs to 188 residues: EP300-interacting inhibitor of differentiation 1 (188 aa).

The interval 1–122 is disordered; the sequence is MSEMAELSEL…PEEEQLSGAG (122 aa). 2 stretches are compositionally biased toward acidic residues: residues 53 to 64 and 94 to 117; these read LEEEGPMEEEEA and FESE…EEEQ. Residues 55-121 are interaction with NR0B2; it reads EEGPMEEEEA…YPEEEQLSGA (67 aa). Residues 179–183 carry the LXCXE motif motif; it reads LGCDE.

As to quaternary structure, interacts via its LXCXE motif with the entire pocket region of RB1. Interacts with EP300, NR0B2 and TRIM27.

Its subcellular location is the nucleus. The protein localises to the cytoplasm. In terms of biological role, interacts with RB1 and EP300 and acts as a repressor of MYOD1 transactivation. Inhibits EP300 and CBP histone acetyltransferase activity. May be involved in coupling cell cycle exit to the transcriptional activation of genes required for cellular differentiation. May act as a candidate coinhibitory factor for NR0B2 that can be directly linked to transcription inhibitory mechanisms. In Pongo abelii (Sumatran orangutan), this protein is EP300-interacting inhibitor of differentiation 1.